The sequence spans 48 residues: Large ribosomal subunit protein bL34 (48 aa).

Belongs to the bacterial ribosomal protein bL34 family.

The polypeptide is Large ribosomal subunit protein bL34 (rpmH) (Mycoplasma pneumoniae (strain ATCC 29342 / M129 / Subtype 1) (Mycoplasmoides pneumoniae)).